We begin with the raw amino-acid sequence, 176 residues long: Isopentenyl-diphosphate Delta-isomerase (176 aa).

Residues His-23 and His-29 each coordinate Mn(2+). In terms of domain architecture, Nudix hydrolase spans 27 to 161 (LRHLAISVFV…PERFTPWLKI (135 aa)). Residue Cys-63 is part of the active site. Cys-63 contributes to the Mg(2+) binding site. His-65 is a binding site for Mn(2+). Glu-83 contacts Mg(2+). 2 residues coordinate Mn(2+): Glu-109 and Glu-111. The active site involves Glu-111.

It belongs to the IPP isomerase type 1 family. Mg(2+) is required as a cofactor. It depends on Mn(2+) as a cofactor.

It is found in the cytoplasm. It carries out the reaction isopentenyl diphosphate = dimethylallyl diphosphate. The protein operates within isoprenoid biosynthesis; dimethylallyl diphosphate biosynthesis; dimethylallyl diphosphate from isopentenyl diphosphate: step 1/1. It functions in the pathway porphyrin-containing compound metabolism; chlorophyll biosynthesis. Catalyzes the 1,3-allylic rearrangement of the homoallylic substrate isopentenyl (IPP) to its highly electrophilic allylic isomer, dimethylallyl diphosphate (DMAPP). This is Isopentenyl-diphosphate Delta-isomerase from Rhodobacter capsulatus (strain ATCC BAA-309 / NBRC 16581 / SB1003).